Consider the following 838-residue polypeptide: Transforming acidic coiled-coil-containing protein 3 (838 aa).

An N-acetylserine modification is found at serine 2. Phosphoserine is present on residues serine 25, serine 39, and serine 71. Positions 123 to 227 are disordered; that stretch reads EADTDLLGDA…HGAEEECKAE (105 aa). The span at 132 to 164 shows a compositional bias: low complexity; the sequence is ASPAFGSGSSSESGPGALADLDCSSSSQSPGSS. 2 positions are modified to phosphoserine: serine 175 and serine 177. A compositionally biased stretch (basic and acidic residues) spans 204-227; the sequence is DPCRTESQHKAETPHGAEEECKAE. Phosphoserine occurs at positions 250, 317, and 402. The interval 311–527 is disordered; sequence GRAMTLSPQE…LELKEESFRD (217 aa). Basic and acidic residues predominate over residues 403–412; it reads YHLDWDKMDD. Position 434 is a phosphoserine (serine 434). Polar residues predominate over residues 492–503; the sequence is NSASTSLPTSCP. Residues 522–577 form a necessary but not sufficient for spindle localization region; sequence EESFRDPAEVLGTGAEVDYLEQFGTSSFKESALRKQSLYLKFDPLLRDSPGRPVPV. Serine 558 carries the post-translational modification Phosphoserine; by AURKA. A disordered region spans residues 569–594; sequence DSPGRPVPVATETSSMHGANETPSGR. The segment covering 579–591 has biased composition (polar residues); it reads TETSSMHGANETP. Positions 594–838 are necessary but not sufficient for spindle localization; it reads RPREAKLVEF…DDLISKMEKI (245 aa). Residues 637 to 837 adopt a coiled-coil conformation; sequence LQYSQKDLDA…CDDLISKMEK (201 aa).

This sequence belongs to the TACC family. As to quaternary structure, interacts with microtubules. Interacts with CKAP5 independently of clathrin. Interacts with CKAP5 and clathrin forming the TACC3/ch-TOG/clathrin complex located at spindle inter-microtubules bridges; TACC3 (phosphorylated at Ser-558 by AURKA) and CLTC are proposed to form a composite microtubule interaction surface. Interacts with CCDC100/CEP120. The coiled coil C-terminal region interacts with AH receptor nuclear translocator protein (ARNT) and ARNT2. Interacts with GCN5L2 and PCAF.

It localises to the cytoplasm. The protein resides in the cytoskeleton. The protein localises to the microtubule organizing center. Its subcellular location is the centrosome. It is found in the spindle. It localises to the spindle pole. Plays a role in the microtubule-dependent coupling of the nucleus and the centrosome. Involved in the processes that regulate centrosome-mediated interkinetic nuclear migration (INM) of neural progenitors. Acts as a component of the TACC3/ch-TOG/clathrin complex proposed to contribute to stabilization of kinetochore fibers of the mitotic spindle by acting as inter-microtubule bridge. The TACC3/ch-TOG/clathrin complex is required for the maintenance of kinetochore fiber tension. May be involved in the control of cell growth and differentiation. May contribute to cancer. The chain is Transforming acidic coiled-coil-containing protein 3 (TACC3) from Homo sapiens (Human).